The sequence spans 108 residues: UPF0060 membrane protein YnfA (108 aa).

Residues 1–5 (MLKTT) lie on the Periplasmic side of the membrane. A helical transmembrane segment spans residues 6–26 (LLFFVTALCEIIGCFLPWLWL). Residues 27–30 (KRGA) lie on the Cytoplasmic side of the membrane. A helical transmembrane segment spans residues 31–51 (SVWWLLPAAASLALFVWLLTL). Over 52-60 (HPAASGRVY) the chain is Periplasmic. The helical transmembrane segment at 61-81 (AAYGGVYVCTALLWLRVVDGV) threads the bilayer. Over 82 to 84 (RLT) the chain is Cytoplasmic. The chain crosses the membrane as a helical span at residues 85–105 (VYDWCGALIALCGMLIIVVGW). Over 106–108 (GRT) the chain is Periplasmic.

The protein belongs to the UPF0060 family.

The protein localises to the cell inner membrane. The protein is UPF0060 membrane protein YnfA of Salmonella agona (strain SL483).